Reading from the N-terminus, the 570-residue chain is Sulfite reductase [NADPH] hemoprotein beta-component (570 aa).

4 residues coordinate [4Fe-4S] cluster: Cys-434, Cys-440, Cys-479, and Cys-483. Position 483 (Cys-483) interacts with siroheme.

Belongs to the nitrite and sulfite reductase 4Fe-4S domain family. In terms of assembly, alpha(8)-beta(8). The alpha component is a flavoprotein, the beta component is a hemoprotein. It depends on siroheme as a cofactor. The cofactor is [4Fe-4S] cluster.

The enzyme catalyses hydrogen sulfide + 3 NADP(+) + 3 H2O = sulfite + 3 NADPH + 4 H(+). Its pathway is sulfur metabolism; hydrogen sulfide biosynthesis; hydrogen sulfide from sulfite (NADPH route): step 1/1. Its function is as follows. Component of the sulfite reductase complex that catalyzes the 6-electron reduction of sulfite to sulfide. This is one of several activities required for the biosynthesis of L-cysteine from sulfate. In Shigella flexneri serotype 5b (strain 8401), this protein is Sulfite reductase [NADPH] hemoprotein beta-component.